Here is a 308-residue protein sequence, read N- to C-terminus: UPF0282 protein YG5714_2245 (308 aa).

Belongs to the UPF0282 family.

This is UPF0282 protein YG5714_2245 from Saccharolobus islandicus (strain Y.G.57.14 / Yellowstone #1) (Sulfolobus islandicus).